A 179-amino-acid chain; its full sequence is RNA pyrophosphohydrolase (179 aa).

The Nudix hydrolase domain occupies 6–149 (GYRANVGIVI…KKPIYEDMLK (144 aa)). Positions 38–59 (GGIDFGESELDALFRELNEEIG) match the Nudix box motif.

This sequence belongs to the Nudix hydrolase family. RppH subfamily. A divalent metal cation serves as cofactor.

Functionally, accelerates the degradation of transcripts by removing pyrophosphate from the 5'-end of triphosphorylated RNA, leading to a more labile monophosphorylated state that can stimulate subsequent ribonuclease cleavage. The polypeptide is RNA pyrophosphohydrolase (Ruthia magnifica subsp. Calyptogena magnifica).